The primary structure comprises 501 residues: Pyruvate kinase (501 aa).

Substrate is bound at residue Arg50. K(+) contacts are provided by Asn52, Ser54, Asp85, and Thr86. Asn52–His55 is an ATP binding site. Residues Arg92 and Lys178 each coordinate ATP. Glu243 serves as a coordination point for Mg(2+). Positions 266, 267, and 299 each coordinate substrate. Asp267 contributes to the Mg(2+) binding site.

The protein belongs to the pyruvate kinase family. In terms of assembly, homotetramer. Requires Mg(2+) as cofactor. K(+) is required as a cofactor.

The catalysed reaction is pyruvate + ATP = phosphoenolpyruvate + ADP + H(+). The protein operates within carbohydrate degradation; glycolysis; pyruvate from D-glyceraldehyde 3-phosphate: step 5/5. In Kluyveromyces lactis (strain ATCC 8585 / CBS 2359 / DSM 70799 / NBRC 1267 / NRRL Y-1140 / WM37) (Yeast), this protein is Pyruvate kinase (PYK1).